Consider the following 500-residue polypeptide: Probable cytosol aminopeptidase (500 aa).

The Mn(2+) site is built by K265 and D270. Residue K277 is part of the active site. 3 residues coordinate Mn(2+): D288, D347, and E349. R351 is a catalytic residue.

The protein belongs to the peptidase M17 family. Mn(2+) is required as a cofactor.

It localises to the cytoplasm. The catalysed reaction is Release of an N-terminal amino acid, Xaa-|-Yaa-, in which Xaa is preferably Leu, but may be other amino acids including Pro although not Arg or Lys, and Yaa may be Pro. Amino acid amides and methyl esters are also readily hydrolyzed, but rates on arylamides are exceedingly low.. The enzyme catalyses Release of an N-terminal amino acid, preferentially leucine, but not glutamic or aspartic acids.. Its function is as follows. Presumably involved in the processing and regular turnover of intracellular proteins. Catalyzes the removal of unsubstituted N-terminal amino acids from various peptides. In Rickettsia typhi (strain ATCC VR-144 / Wilmington), this protein is Probable cytosol aminopeptidase.